Consider the following 517-residue polypeptide: Nuclear receptor subfamily 5 group A member 2 (517 aa).

The nuclear receptor DNA-binding region spans 43–118 (DEMCPVCGDK…VGMKLEAVRA (76 aa)). Residues cysteine 46, cysteine 49, cysteine 63, cysteine 66, cysteine 82, cysteine 88, cysteine 98, and cysteine 101 each contribute to the Zn(2+) site. NR C4-type zinc fingers lie at residues 46–66 (CPVCGDKVSGYHYGLLTCESC) and 82–101 (CIENQSCQIDKTQRKRCPYC). The C-terminal extension (CTE) stretch occupies residues 112–127 (KLEAVRADRMRGGRNK). Residues 128 to 147 (FGPMYKRDRALKQQKKALIR) carry the FTZ-F1 box motif. Residues 182-211 (GLPLSHHHHHHHHHHHHSSSSAGLPPADFD) are disordered. The span at 186–199 (SHHHHHHHHHHHHS) shows a compositional bias: basic residues. In terms of domain architecture, NR LBD spans 276-515 (SFPHLVVELL…NLLIEMLHAK (240 aa)). A phospholipid derivative is bound by residues 397 to 400 (GATL), tyrosine 492, and lysine 496. An AF-2 region spans residues 504 to 515 (CNNLLIEMLHAK).

It belongs to the nuclear hormone receptor family. NR5 subfamily. As to quaternary structure, monomer; Binds DNA as a monomer.

Its subcellular location is the nucleus. The protein resides in the chromosome. In terms of biological role, orphan nuclear receptor that binds DNA as a monomer to the 5'-TCAAGGCCA-3' sequence and controls expression of target genes: regulates key biological processes, such as cholesterol and bile acid synthesis pathways, as well as cartilage, liver and pancreas morphogenesis. Ligand-binding causes conformational change which causes recruitment of coactivators, promoting target gene activation. The specific ligand is unknown, but specific phospholipids, such as phosphatidylethanolamine, phosphatidylserine, dilauroyl phosphatidylcholine and diundecanoyl phosphatidylcholine can act as ligand in vitro. Acts as a pioneer transcription factor, which unwraps target DNA from histones and elicits local opening of closed chromatin. Involved in the formation of connective tissue in lower jaw. Lacks transcription factor activity; unable to activate expression of target genes. This is Nuclear receptor subfamily 5 group A member 2 from Danio rerio (Zebrafish).